The sequence spans 255 residues: Acetyl-coenzyme A carboxylase carboxyl transferase subunit alpha (255 aa).

Residues 1–235 (MNIAKIVREA…KKELQTELAR (235 aa)) form the CoA carboxyltransferase C-terminal domain.

Belongs to the AccA family. Acetyl-CoA carboxylase is a heterohexamer composed of biotin carboxyl carrier protein (AccB), biotin carboxylase (AccC) and two subunits each of ACCase subunit alpha (AccA) and ACCase subunit beta (AccD).

Its subcellular location is the cytoplasm. It catalyses the reaction N(6)-carboxybiotinyl-L-lysyl-[protein] + acetyl-CoA = N(6)-biotinyl-L-lysyl-[protein] + malonyl-CoA. It participates in lipid metabolism; malonyl-CoA biosynthesis; malonyl-CoA from acetyl-CoA: step 1/1. Functionally, component of the acetyl coenzyme A carboxylase (ACC) complex. First, biotin carboxylase catalyzes the carboxylation of biotin on its carrier protein (BCCP) and then the CO(2) group is transferred by the carboxyltransferase to acetyl-CoA to form malonyl-CoA. The polypeptide is Acetyl-coenzyme A carboxylase carboxyl transferase subunit alpha (Streptococcus pneumoniae serotype 19F (strain G54)).